A 252-amino-acid polypeptide reads, in one-letter code: Mannose-P-dolichol utilization defect 1 protein homolog (252 aa).

Positions 34 to 100 (KALLSKGLGL…HGYPFSAWGD (67 aa)) constitute a PQ-loop 1 domain. 7 consecutive transmembrane segments (helical) span residues 41–61 (LGLA…LKIL), 69–89 (INIV…SYNF), 98–118 (WGDS…VLFF), 126–146 (GLFL…LTPM), 148–168 (VLFT…LSQA), 180–200 (LSAA…FTSI), and 207–227 (MIIL…GQLI). Residues 157–211 (IPILLVGKLSQAYTNYQAGSTGQLSAATVIMMFAGSVARIFTSIQETGDFMIILT) form the PQ-loop 2 domain.

This sequence belongs to the MPDU1 (TC 2.A.43.3) family.

The protein localises to the membrane. The polypeptide is Mannose-P-dolichol utilization defect 1 protein homolog (Drosophila melanogaster (Fruit fly)).